Reading from the N-terminus, the 222-residue chain is Putative N-acetylmannosamine-6-phosphate 2-epimerase (222 aa).

It belongs to the NanE family.

The enzyme catalyses an N-acyl-D-glucosamine 6-phosphate = an N-acyl-D-mannosamine 6-phosphate. It functions in the pathway amino-sugar metabolism; N-acetylneuraminate degradation; D-fructose 6-phosphate from N-acetylneuraminate: step 3/5. Converts N-acetylmannosamine-6-phosphate (ManNAc-6-P) to N-acetylglucosamine-6-phosphate (GlcNAc-6-P). This chain is Putative N-acetylmannosamine-6-phosphate 2-epimerase, found in Staphylococcus aureus (strain USA300).